Consider the following 429-residue polypeptide: Glutamyl-tRNA reductase (429 aa).

Residues 49–52 (TCNR), S108, 113–115 (EAQ), and Q119 contribute to the substrate site. Catalysis depends on C50, which acts as the Nucleophile. NADP(+) is bound at residue 188–193 (GAGEMS).

The protein belongs to the glutamyl-tRNA reductase family. As to quaternary structure, homodimer.

The catalysed reaction is (S)-4-amino-5-oxopentanoate + tRNA(Glu) + NADP(+) = L-glutamyl-tRNA(Glu) + NADPH + H(+). The protein operates within porphyrin-containing compound metabolism; protoporphyrin-IX biosynthesis; 5-aminolevulinate from L-glutamyl-tRNA(Glu): step 1/2. Functionally, catalyzes the NADPH-dependent reduction of glutamyl-tRNA(Glu) to glutamate 1-semialdehyde (GSA). This Rubrobacter xylanophilus (strain DSM 9941 / JCM 11954 / NBRC 16129 / PRD-1) protein is Glutamyl-tRNA reductase.